We begin with the raw amino-acid sequence, 374 residues long: Pectinesterase (374 aa).

The first 31 residues, 1-31 (MVKLLNSTRELSINALSMLNSFGDMVAQATG), serve as a signal peptide directing secretion. Asparagine 58 and asparagine 124 each carry an N-linked (GlcNAc...) asparagine glycan. Threonine 133 and glutamine 163 together coordinate substrate. Residue aspartate 186 is the Proton donor of the active site. An intrachain disulfide couples cysteine 200 to cysteine 220. Aspartate 207 functions as the Nucleophile in the catalytic mechanism. A glycan (N-linked (GlcNAc...) asparagine) is linked at asparagine 230. Substrate is bound by residues arginine 275 and tryptophan 277. An N-linked (GlcNAc...) asparagine glycan is attached at asparagine 303.

Belongs to the pectinesterase family. In terms of tissue distribution, pollen, and at much lower levels in pistils and petals.

The protein resides in the secreted. It localises to the cell wall. It catalyses the reaction [(1-&gt;4)-alpha-D-galacturonosyl methyl ester](n) + n H2O = [(1-&gt;4)-alpha-D-galacturonosyl](n) + n methanol + n H(+). It participates in glycan metabolism; pectin degradation; 2-dehydro-3-deoxy-D-gluconate from pectin: step 1/5. Functionally, may play a role in pollen germination and/or tube growth. This Petunia integrifolia (Violet-flowered petunia) protein is Pectinesterase (PPE1).